We begin with the raw amino-acid sequence, 304 residues long: tRNA dimethylallyltransferase (304 aa).

10–17 (GPTASGKT) provides a ligand contact to ATP. Residue 12-17 (TASGKT) participates in substrate binding. Interaction with substrate tRNA stretches follow at residues 35 to 38 (DSAL), 159 to 163 (QRLSR), and 240 to 245 (RCVGYR).

It belongs to the IPP transferase family. In terms of assembly, monomer. It depends on Mg(2+) as a cofactor.

The enzyme catalyses adenosine(37) in tRNA + dimethylallyl diphosphate = N(6)-dimethylallyladenosine(37) in tRNA + diphosphate. Its function is as follows. Catalyzes the transfer of a dimethylallyl group onto the adenine at position 37 in tRNAs that read codons beginning with uridine, leading to the formation of N6-(dimethylallyl)adenosine (i(6)A). The polypeptide is tRNA dimethylallyltransferase (Shewanella sp. (strain W3-18-1)).